Consider the following 1224-residue polypeptide: ATP-dependent helicase/nuclease subunit A (1224 aa).

The UvrD-like helicase ATP-binding domain occupies 15-480 (VIWTDAQWQS…IDLSQNFRSR (466 aa)). 36–43 (AAAGSGKT) is an ATP binding site. A UvrD-like helicase C-terminal domain is found at 497–791 (EQVGEISYDD…RMMTIHSSKG (295 aa)).

Belongs to the helicase family. AddA subfamily. As to quaternary structure, heterodimer of AddA and AddB/RexB. The cofactor is Mg(2+).

The catalysed reaction is Couples ATP hydrolysis with the unwinding of duplex DNA by translocating in the 3'-5' direction.. It catalyses the reaction ATP + H2O = ADP + phosphate + H(+). In terms of biological role, the heterodimer acts as both an ATP-dependent DNA helicase and an ATP-dependent, dual-direction single-stranded exonuclease. Recognizes the chi site generating a DNA molecule suitable for the initiation of homologous recombination. The AddA nuclease domain is required for chi fragment generation; this subunit has the helicase and 3' -&gt; 5' nuclease activities. The protein is ATP-dependent helicase/nuclease subunit A of Staphylococcus epidermidis (strain ATCC 12228 / FDA PCI 1200).